The sequence spans 305 residues: Tyrosine recombinase XerD (305 aa).

The region spanning Met1–Ile83 is the Core-binding (CB) domain. The 195-residue stretch at Lys104–Leu298 folds into the Tyr recombinase domain. Catalysis depends on residues Arg145, Lys175, His250, Arg253, and His276. Catalysis depends on Tyr285, which acts as the O-(3'-phospho-DNA)-tyrosine intermediate.

Belongs to the 'phage' integrase family. XerD subfamily. In terms of assembly, forms a cyclic heterotetrameric complex composed of two molecules of XerC and two molecules of XerD.

It is found in the cytoplasm. Functionally, site-specific tyrosine recombinase, which acts by catalyzing the cutting and rejoining of the recombining DNA molecules. The XerC-XerD complex is essential to convert dimers of the bacterial chromosome into monomers to permit their segregation at cell division. It also contributes to the segregational stability of plasmids. The protein is Tyrosine recombinase XerD of Rickettsia bellii (strain RML369-C).